The chain runs to 440 residues: Protein CANDIDATE G-PROTEIN COUPLED RECEPTOR 7 (440 aa).

Residues 1–24 form the signal peptide; the sequence is MAKMPLSVVVFLLFSAAFLAVSMA. 2 N-linked (GlcNAc...) asparagine glycosylation sites follow: Asn-124 and Asn-162. 5 helical membrane passes run 175-195, 207-227, 243-263, 281-301, and 315-335; these read LPTL…FWSY, IHLL…CAAE, ILFY…IILI, VLII…VIGE, and VFLL…VWSI. Residue Asn-351 is glycosylated (N-linked (GlcNAc...) asparagine). The next 2 helical transmembrane spans lie at 363–383 and 390–410; these read IVVI…KTIA and VSFA…FHMF.

Belongs to the LU7TM family.

It is found in the membrane. Functionally, plays a role in plants and microbes interactions. G-protein coupled receptor involved in root growth mediated by the bacterial quorum-sensing signals N-acyl-homoserine lactones (AHLs). In Arabidopsis thaliana (Mouse-ear cress), this protein is Protein CANDIDATE G-PROTEIN COUPLED RECEPTOR 7.